We begin with the raw amino-acid sequence, 594 residues long: Probable translation initiation factor IF-2 (594 aa).

One can recognise a tr-type G domain in the interval 5-224; the sequence is YRAPIVVVVG…LMAGLTQRLV (220 aa). The tract at residues 14–21 is G1; sequence GHVDVGKT. 14–21 is a GTP binding site; sequence GHVDVGKT. Residues 39 to 43 are G2; that stretch reads MITQH. The tract at residues 80 to 83 is G3; the sequence is DTPG. GTP contacts are provided by residues 80–84 and 134–137; these read DTPGH and NKVD. Residues 134-137 form a G4 region; that stretch reads NKVD. The interval 202 to 204 is G5; sequence SAV.

Belongs to the TRAFAC class translation factor GTPase superfamily. Classic translation factor GTPase family. IF-2 subfamily.

Function in general translation initiation by promoting the binding of the formylmethionine-tRNA to ribosomes. Seems to function along with eIF-2. The sequence is that of Probable translation initiation factor IF-2 from Caldivirga maquilingensis (strain ATCC 700844 / DSM 13496 / JCM 10307 / IC-167).